Here is a 218-residue protein sequence, read N- to C-terminus: N-(5'-phosphoribosyl)anthranilate isomerase (218 aa).

Belongs to the TrpF family.

The catalysed reaction is N-(5-phospho-beta-D-ribosyl)anthranilate = 1-(2-carboxyphenylamino)-1-deoxy-D-ribulose 5-phosphate. It participates in amino-acid biosynthesis; L-tryptophan biosynthesis; L-tryptophan from chorismate: step 3/5. The polypeptide is N-(5'-phosphoribosyl)anthranilate isomerase (Acetivibrio thermocellus (strain ATCC 27405 / DSM 1237 / JCM 9322 / NBRC 103400 / NCIMB 10682 / NRRL B-4536 / VPI 7372) (Clostridium thermocellum)).